Here is a 425-residue protein sequence, read N- to C-terminus: Acyl-lipid (8-3)-desaturase (425 aa).

Residues 1-25 form a disordered region; that stretch reads MPPRDSYSYAAPPSAQLHEVDTPQE. A Cytochrome b5 heme-binding domain is found at 18-93; it reads HEVDTPQEHD…SRPVHKGYSP (76 aa). The heme site is built by histidine 47 and histidine 69. A helical membrane pass occupies residues 134 to 154; it reads VAGAALIWHGYTFAGIAMLGV. Positions 164-168 match the Histidine box-1 motif; the sequence is HEGGH. The helical transmembrane segment at 175–197 threads the bilayer; the sequence is IAFDRAIQVACYGLGCGMSGAWW. Residues 201–206 carry the Histidine box-2 motif; sequence HNKHHA. A run of 2 helical transmembrane segments spans residues 241–261 and 297–317; these read WLSM…ALGW and GAGY…MYIF. Residues 365–369 carry the Histidine box-3 motif; sequence QIEHH.

This sequence belongs to the fatty acid desaturase type 1 family. Requires Fe(2+) as cofactor.

It localises to the membrane. It carries out the reaction an (8Z,11Z,14Z)-icosatrienoyl-containing glycerolipid + 2 Fe(II)-[cytochrome b5] + O2 + 2 H(+) = (5Z,8Z,11Z,14Z)-eicosatetraenoyl-containing glycerolipid + 2 Fe(III)-[cytochrome b5] + 2 H2O. The catalysed reaction is an (8Z,11Z,14Z,17Z)-eicosatetraenoyl-containing glycerolipid + 2 Fe(II)-[cytochrome b5] + O2 + 2 H(+) = a (5Z,8Z,11Z,14Z,17Z)-eicosapentaenoyl-containing glycerolipid + 2 Fe(III)-[cytochrome b5] + 2 H2O. In terms of biological role, fatty acid desaturase that introduces a cis double bond at the 5-position in 20-carbon polyunsaturated fatty acids incorporated in a glycerolipid that contain a Delta(8) double bond. In Rebecca salina (Marine microalga), this protein is Acyl-lipid (8-3)-desaturase.